The chain runs to 275 residues: uncharacterized protein (275 aa).

A compositionally biased stretch (polar residues) spans 148 to 158 (TFPTTAPSITP). Positions 148-173 (TFPTTAPSITPGNKEGEKTTSTDTDE) are disordered. The chain crosses the membrane as a helical span at residues 187–207 (ILIAVTLLLSGVAIIVFVIFE). The segment at 234–264 (GQPPGTAESKPDSQPQKVGQDAANSSNPKKA) is disordered. A compositionally biased stretch (polar residues) spans 245–261 (DSQPQKVGQDAANSSNP).

The protein resides in the membrane. This is an uncharacterized protein from Homo sapiens (Human).